The primary structure comprises 485 residues: Serine hydroxymethyltransferase, mitochondrial (485 aa).

Lysine 259 carries the post-translational modification N6-(pyridoxal phosphate)lysine.

Belongs to the SHMT family. As to quaternary structure, homotetramer. It depends on pyridoxal 5'-phosphate as a cofactor.

The protein resides in the mitochondrion. It catalyses the reaction (6R)-5,10-methylene-5,6,7,8-tetrahydrofolate + glycine + H2O = (6S)-5,6,7,8-tetrahydrofolate + L-serine. It functions in the pathway one-carbon metabolism; tetrahydrofolate interconversion. In terms of biological role, interconversion of serine and glycine. This Candida glabrata (strain ATCC 2001 / BCRC 20586 / JCM 3761 / NBRC 0622 / NRRL Y-65 / CBS 138) (Yeast) protein is Serine hydroxymethyltransferase, mitochondrial (SHM1).